A 247-amino-acid polypeptide reads, in one-letter code: Homeobox-leucine zipper protein HOX15 (247 aa).

The tract at residues 1–44 (MAQDDEDVGLALGLSLGSGGHRRQRESRDEAPSSAAASLLTLRL) is disordered. Positions 32–44 (PSSAAASLLTLRL) are enriched in low complexity. Residues 91–150 (NSRKKLRLSKEQSALLEDRFKEHSTLNPKQKVALAKQLNLRPRQVEVWFQNRRARTKLKQ) constitute a DNA-binding region (homeobox). A leucine-zipper region spans residues 149 to 193 (KQTEVDCELLKRCCETLTEENRRLHRELQQLRALTHSTAAGFFMA). The interval 221-247 (SPTAAADRTNKPTAPHLFSPFAKSAAC) is disordered.

It belongs to the HD-ZIP homeobox family. Class II subfamily. Expressed in seedlings, stems, leaf blades and panicles.

It is found in the nucleus. In terms of biological role, probable transcription factor. This chain is Homeobox-leucine zipper protein HOX15 (HOX15), found in Oryza sativa subsp. japonica (Rice).